Reading from the N-terminus, the 437-residue chain is Epsilon-sarcoglycan (437 aa).

Topologically, residues 1–317 (MQLPRWWELG…LKSRDYYTDF (317 aa)) are extracellular. N-linked (GlcNAc...) asparagine glycosylation is present at N200. Residues 318 to 338 (LITLAVPSAVALVLFLILAYI) form a helical membrane-spanning segment. Topologically, residues 339–437 (MCCRREGVEK…QQQTTGKWYP (99 aa)) are cytoplasmic.

Belongs to the sarcoglycan alpha/epsilon family. N-glycosylated. In terms of processing, ubiquitinated, leading to its degradation by the proteasome. In terms of tissue distribution, ubiquitous.

It localises to the cell membrane. It is found in the sarcolemma. Its subcellular location is the cytoplasm. The protein localises to the cytoskeleton. The protein resides in the cell projection. It localises to the dendrite. It is found in the golgi apparatus. Its function is as follows. Component of the sarcoglycan complex, a subcomplex of the dystrophin-glycoprotein complex which forms a link between the F-actin cytoskeleton and the extracellular matrix. The sequence is that of Epsilon-sarcoglycan (SGCE) from Homo sapiens (Human).